The sequence spans 359 residues: Small ribosomal subunit biogenesis GTPase RsgA (359 aa).

Residues 101-259 (KRKGSQAIAS…LMDNPGIREV (159 aa)) form the CP-type G domain. GTP-binding positions include 149 to 152 (NKKD) and 201 to 209 (GSSGAGKST). Cys284, Cys289, His291, and Cys297 together coordinate Zn(2+). A disordered region spans residues 331-359 (DPEEARKKKQKDKQMSKALQKRLKDKGRK). The span at 349–359 (LQKRLKDKGRK) shows a compositional bias: basic residues.

It belongs to the TRAFAC class YlqF/YawG GTPase family. RsgA subfamily. In terms of assembly, monomer. Associates with 30S ribosomal subunit, binds 16S rRNA. It depends on Zn(2+) as a cofactor.

The protein localises to the cytoplasm. In terms of biological role, one of several proteins that assist in the late maturation steps of the functional core of the 30S ribosomal subunit. Helps release RbfA from mature subunits. May play a role in the assembly of ribosomal proteins into the subunit. Circularly permuted GTPase that catalyzes slow GTP hydrolysis, GTPase activity is stimulated by the 30S ribosomal subunit. This is Small ribosomal subunit biogenesis GTPase RsgA from Leptospira interrogans serogroup Icterohaemorrhagiae serovar copenhageni (strain Fiocruz L1-130).